Consider the following 311-residue polypeptide: Ribosomal RNA small subunit methyltransferase H (311 aa).

S-adenosyl-L-methionine is bound by residues 32–34 (AGH), D52, F79, D100, and Q107.

This sequence belongs to the methyltransferase superfamily. RsmH family.

Its subcellular location is the cytoplasm. The catalysed reaction is cytidine(1402) in 16S rRNA + S-adenosyl-L-methionine = N(4)-methylcytidine(1402) in 16S rRNA + S-adenosyl-L-homocysteine + H(+). Its function is as follows. Specifically methylates the N4 position of cytidine in position 1402 (C1402) of 16S rRNA. The chain is Ribosomal RNA small subunit methyltransferase H from Staphylococcus aureus (strain bovine RF122 / ET3-1).